A 103-amino-acid chain; its full sequence is MAKFIRNLADKAPSMVAAAVTYSKPRLATFWHYARVELVPPTLGEIPTAIQSMKSIIHSAQTGNFKHLTVKEAVLNGLVATEVWMWFYIGEIIGKRGIVGYDV.

At A2 the chain carries N-acetylalanine. 3 positions are modified to N6-acetyllysine: K11, K24, and K54.

This sequence belongs to the ATPase g subunit family. As to quaternary structure, component of the ATP synthase complex composed at least of ATP5F1A/subunit alpha, ATP5F1B/subunit beta, ATP5MC1/subunit c (homooctomer), MT-ATP6/subunit a, MT-ATP8/subunit 8, ATP5ME/subunit e, ATP5MF/subunit f, ATP5MG/subunit g, ATP5MK/subunit k, ATP5MJ/subunit j, ATP5F1C/subunit gamma, ATP5F1D/subunit delta, ATP5F1E/subunit epsilon, ATP5PF/subunit F6, ATP5PB/subunit b, ATP5PD/subunit d, ATP5PO/subunit OSCP. ATP synthase complex consists of a soluble F(1) head domain (subunits alpha(3) and beta(3)) - the catalytic core - and a membrane F(0) domain - the membrane proton channel (subunits c, a, 8, e, f, g, k and j). These two domains are linked by a central stalk (subunits gamma, delta, and epsilon) rotating inside the F1 region and a stationary peripheral stalk (subunits F6, b, d, and OSCP).

It is found in the mitochondrion. The protein localises to the mitochondrion inner membrane. Subunit g, of the mitochondrial membrane ATP synthase complex (F(1)F(0) ATP synthase or Complex V) that produces ATP from ADP in the presence of a proton gradient across the membrane which is generated by electron transport complexes of the respiratory chain. ATP synthase complex consist of a soluble F(1) head domain - the catalytic core - and a membrane F(1) domain - the membrane proton channel. These two domains are linked by a central stalk rotating inside the F(1) region and a stationary peripheral stalk. During catalysis, ATP synthesis in the catalytic domain of F(1) is coupled via a rotary mechanism of the central stalk subunits to proton translocation. In vivo, can only synthesize ATP although its ATP hydrolase activity can be activated artificially in vitro. Part of the complex F(0) domain. The polypeptide is ATP synthase F(0) complex subunit g, mitochondrial (Rattus norvegicus (Rat)).